The following is a 467-amino-acid chain: Retinoic acid receptor RXR-alpha (467 aa).

The tract at residues 1–61 (MDTKHFLPLD…LHSPISTLSS (61 aa)) is disordered. The modulating stretch occupies residues 1-139 (MDTKHFLPLD…GNMSSFTKHI (139 aa)). K4 is covalently cross-linked (Glycyl lysine isopeptide (Lys-Gly) (interchain with G-Cter in SUMO2)). Phosphoserine occurs at positions 22 and 28. Positions 32–55 (PSLHPSLGPGLGSPLGSPGQLHSP) are enriched in low complexity. 2 positions are modified to phosphoserine; by MAPK8 and MAPK9: S61 and S75. The tract at residues 79–109 (PHSMSVPTTPTLGFETGSPQLNSPMNPVSSS) is disordered. Residues 83-109 (SVPTTPTLGFETGSPQLNSPMNPVSSS) show a composition bias toward polar residues. Residue T87 is modified to Phosphothreonine; by MAPK8 and MAPK9. K113 participates in a covalent cross-link: Glycyl lysine isopeptide (Lys-Gly) (interchain with G-Cter in SUMO). A Phosphoserine modification is found at S134. Residues C140 and C143 each contribute to the Zn(2+) site. Residues 140-160 (CAICGDRSSGKHYGVYSCEGC) form an NR C4-type zinc finger. A DNA-binding region (nuclear receptor) is located at residues 140–205 (CAICGDRSSG…RYQKCLAMGM (66 aa)). K150 bears the N6-acetyllysine mark. Zn(2+)-binding residues include C157 and C160. Residues 165-170 (KRTVRK) form a nuclear localization signal region. Residues C176, C182, C192, and C195 each contribute to the Zn(2+) site. The segment at 176–200 (CRDNKDCLIDKRQRNRCQYCRYQKC) adopts an NR C4-type zinc-finger fold. The segment at 206-229 (KREAVQEERQRGKDRNENEVESTS) is hinge. Over residues 211–223 (QEERQRGKDRNEN) the composition is skewed to basic and acidic residues. A disordered region spans residues 211 to 233 (QEERQRGKDRNENEVESTSSANE). Residues 232–463 (NEDMPVEKIL…TFLMEMLEAP (232 aa)) form the NR LBD domain. Phosphoserine is present on S264. S265 is subject to Phosphoserine; by MAPK8 and MAPK9. R321 and A332 together coordinate 9-cis-retinoate. All-trans-retinoate-binding residues include R321 and A332. A required for nuclear export region spans residues 353 to 373 (RVLTELVSKMRDMQMDKTELG).

The protein belongs to the nuclear hormone receptor family. NR2 subfamily. In terms of assembly, homodimer. Heterodimer (via C-terminus) with RARA; required for ligand-dependent retinoic acid receptor transcriptional activity; association with RARA is enhanced by pulsatile shear stress. Heterodimer with PPARA (via the leucine-like zipper in the LBD); the interaction is required for PPARA transcriptional activity. Heterodimerizes with PPARG. Heterodimerizes (via NR LBD) with RARB. Heterodimerizes with NR1H4; the heterodimerization enhances the binding affinity for LXXLL motifs from coactivators. Interacts with NCOA3 and NCOA6 coactivators. Interacts with FAM120B. Interacts with coactivator PELP1, SENP6, SFPQ, DNTTIP2 and RNF8. Interacts with PRMT2. Interacts with ASXL1. Interacts with BHLHE40/DEC1, BHLHE41/DEC2, MED1, NCOR1 and NCOR2. Interacts in a ligand-dependent fashion with MED1 and NCOA1. Interacts with VDR. Interacts with EP300; the interaction is decreased by 9-cis retinoic acid. Heterodimer (via C-terminus) with NR4A1 (DNA-binding domain); the interaction is enhanced by 9-cis retinoic acid. NR4A1 competes with EP300 for interaction with RXRA and thereby attenuates EP300 mediated acetylation of RXRA. In the absence of hormonal ligand, interacts with TACC1. Interacts ith IGFBP3. Phosphorylated on serine and threonine residues mainly in the N-terminal modulating domain. Constitutively phosphorylated on Ser-22 in the presence or absence of ligand. Under stress conditions, hyperphosphorylated by activated JNK on Ser-61, Ser-75, Thr-87 and Ser-265. Phosphorylated on Ser-28, in vitro, by PKA. This phosphorylation is required for repression of cAMP-mediated transcriptional activity of RARA. In terms of processing, ubiquitinated by UBR5, leading to its degradation: UBR5 specifically recognizes and binds ligand-bound RXRA when it is not associated with coactivators (NCOAs). In presence of NCOAs, the UBR5-degron is not accessible, preventing its ubiquitination and degradation. Post-translationally, sumoylation negatively regulates transcriptional activity. Desumoylated specifically by SENP6. Acetylated by EP300; acetylation enhances DNA binding and transcriptional activity. As to expression, expressed in the adrenal gland with main expression in the zona fasciculata and medulla (at protein level). Expressed in aortic endothelial cells, with high expression in the descending thoracic aorta and the outer curvature of the aortic arch, where pulsatory shear stress exists, but very low in the inner curvature of the aortic arch, where oscillatory shear stress prevails (at protein level).

The protein localises to the nucleus. Its subcellular location is the cytoplasm. It is found in the mitochondrion. Its function is as follows. Receptor for retinoic acid that acts as a transcription factor. Forms homo- or heterodimers with retinoic acid receptors (RARs) and binds to target response elements in response to their ligands, all-trans or 9-cis retinoic acid, to regulate gene expression in various biological processes. The RAR/RXR heterodimers bind to the retinoic acid response elements (RARE) composed of tandem 5'-AGGTCA-3' sites known as DR1-DR5 to regulate transcription. The high affinity ligand for retinoid X receptors (RXRs) is 9-cis retinoic acid. In the absence of ligand, the RXR-RAR heterodimers associate with a multiprotein complex containing transcription corepressors that induce histone deacetylation, chromatin condensation and transcriptional suppression. On ligand binding, the corepressors dissociate from the receptors and coactivators are recruited leading to transcriptional activation. Serves as a common heterodimeric partner for a number of nuclear receptors, such as RARA, RARB and PPARA. The RXRA/RARB heterodimer can act as a transcriptional repressor or transcriptional activator, depending on the RARE DNA element context. The RXRA/PPARA heterodimer is required for PPARA transcriptional activity on fatty acid oxidation genes such as ACOX1 and the P450 system genes. Together with RARA, positively regulates microRNA-10a expression, thereby inhibiting the GATA6/VCAM1 signaling response to pulsatile shear stress in vascular endothelial cells. Acts as an enhancer of RARA binding to RARE DNA element. May facilitate the nuclear import of heterodimerization partners such as VDR and NR4A1. Promotes myelin debris phagocytosis and remyelination by macrophages. Plays a role in the attenuation of the innate immune system in response to viral infections, possibly by negatively regulating the transcription of antiviral genes such as type I IFN genes. Involved in the regulation of calcium signaling by repressing ITPR2 gene expression, thereby controlling cellular senescence. The sequence is that of Retinoic acid receptor RXR-alpha (Rxra) from Rattus norvegicus (Rat).